The sequence spans 284 residues: 4-diphosphocytidyl-2-C-methyl-D-erythritol kinase (284 aa).

Residue lysine 14 is part of the active site. 98–108 (PMGGGLGGGSS) provides a ligand contact to ATP. Residue aspartate 140 is part of the active site.

The protein belongs to the GHMP kinase family. IspE subfamily.

The catalysed reaction is 4-CDP-2-C-methyl-D-erythritol + ATP = 4-CDP-2-C-methyl-D-erythritol 2-phosphate + ADP + H(+). The protein operates within isoprenoid biosynthesis; isopentenyl diphosphate biosynthesis via DXP pathway; isopentenyl diphosphate from 1-deoxy-D-xylulose 5-phosphate: step 3/6. Its function is as follows. Catalyzes the phosphorylation of the position 2 hydroxy group of 4-diphosphocytidyl-2C-methyl-D-erythritol. This chain is 4-diphosphocytidyl-2-C-methyl-D-erythritol kinase, found in Shewanella piezotolerans (strain WP3 / JCM 13877).